The chain runs to 520 residues: Protein RCC2 (520 aa).

The segment at 1 to 78 is disordered; it reads MPRKKGAAWE…RPATAGKAAG (78 aa). Position 14 is a phosphoserine (serine 14). Threonine 18 carries the phosphothreonine modification. A compositionally biased stretch (basic residues) spans 22–34; it reads GPRRRGGPAGRKR. Residues serine 41, serine 42, serine 43, serine 44, serine 48, and serine 49 each carry the phosphoserine modification. Residues 69–78 are compositionally biased toward low complexity; it reads RPATAGKAAG. An N6-acetyllysine mark is found at lysine 90 and lysine 122. 7 RCC1 repeats span residues 101 to 163, 166 to 217, 219 to 269, 271 to 345, 346 to 399, 401 to 445, and 446 to 499; these read KGQL…SLLI, EGKL…ALTD, GSVF…LMDC, GNLY…VLDS, QKRV…AVSE, GGLF…VAAD, and ESTI…VIAR. Lysine 291 bears the N6-acetyllysine mark. A required for interaction with RAC1 region spans residues 316-323; sequence KTKDGQIL. The residue at position 340 (threonine 340) is a Phosphothreonine. Position 375 is an N6-acetyllysine (lysine 375).

In terms of assembly, interacts with RAC1. Interacts with nucleotide-free and with GDP and GTP-bound forms of RAC1, with a slight preference for GDP-bound RAC1. Binds preferentially to the nucleotide-free form of RAC1. Interacts with CORO1C. Interacts with microtubules.

Its subcellular location is the nucleus. It localises to the nucleolus. The protein resides in the cytoplasm. It is found in the cytoskeleton. The protein localises to the chromosome. Its subcellular location is the centromere. It localises to the spindle. The protein resides in the midbody. It is found in the cell membrane. Multifunctional protein that may affect its functions by regulating the activity of small GTPases, such as RAC1 and RALA. Required for normal progress through the cell cycle, both during interphase and during mitosis. Required for the presence of normal levels of MAD2L1, AURKB and BIRC5 on inner centromeres during mitosis, and for normal attachment of kinetochores to mitotic spindles. Required for normal organization of the microtubule cytoskeleton in interphase cells. Functions as a guanine nucleotide exchange factor (GEF) for RALA. Interferes with the activation of RAC1 by guanine nucleotide exchange factors. Prevents accumulation of active, GTP-bound RAC1, and suppresses RAC1-mediated reorganization of the actin cytoskeleton and formation of membrane protrusions. Required for normal cellular responses to contacts with the extracellular matrix of adjacent cells, and for directional cell migration in response to a fibronectin gradient (in vitro). In Mus musculus (Mouse), this protein is Protein RCC2 (Rcc2).